Consider the following 103-residue polypeptide: Hexon-interlacing protein (103 aa).

The disordered stretch occupies residues arginine 25–serine 45. A coiled-coil region spans residues leucine 72 to arginine 99.

Belongs to the adenoviridae hexon-interlacing protein family. Homotrimer. Interacts with hexon protein; this interaction tethers the hexons together. Self-interacts with adjacent proteins. Interacts with kinesin light chain KLC1; this interaction leads to capsid disruption at the nuclear pore complex during virus entry into host cell.

The protein localises to the virion. Its subcellular location is the host nucleus. In terms of biological role, structural component of the virion that acts as a cement protein on the capsid exterior and forms triskelion structures consisting of three molecules that stabilize three hexon trimers at the center of each icosahedral facet and fixes the peripentonal hexons. Dispensable for assembly. During virus entry, recruits the anterograde motor kinesin-1 to the capsid docked at the nuclear pore complex thereby subjecting the docked capsid to a pulling force. The resulting tension leads to capsid disruption, dispersion of capsid fragments toward cell periphery and eventually viral DNA entry into the host nucleus. The polypeptide is Hexon-interlacing protein (Canine adenovirus serotype 1 (strain CLL) (CAdV-1)).